Consider the following 284-residue polypeptide: uncharacterized protein (284 aa).

The AB hydrolase-1 domain occupies 25–123 (PILVMHGGHS…NTLTLQSAVT (99 aa)). Ser96 is an active-site residue.

Belongs to the AB hydrolase superfamily.

This is an uncharacterized protein from Bacillus subtilis (strain 168).